Consider the following 93-residue polypeptide: Small ribosomal subunit protein uS17 (93 aa).

It belongs to the universal ribosomal protein uS17 family. Part of the 30S ribosomal subunit.

Its function is as follows. One of the primary rRNA binding proteins, it binds specifically to the 5'-end of 16S ribosomal RNA. The polypeptide is Small ribosomal subunit protein uS17 (Rhodococcus jostii (strain RHA1)).